The sequence spans 227 residues: ATP synthase F(0) complex subunit a (227 aa).

Transmembrane regions (helical) follow at residues 14–34, 69–89, 98–118, 139–159, 174–194, and 196–216; these read LLGIPLILLSLLFPTLLLPSP, WALILTSLMTFLLLINLLGLL, QLSMNMALAFPLWLATLLTGL, IPALILIETTSLLIRPLALGV, LISTATLALLPTMPTISVLTA, and VLLLLTILELAVAMIQAYVFV.

It belongs to the ATPase A chain family. As to quaternary structure, component of the ATP synthase complex composed at least of ATP5F1A/subunit alpha, ATP5F1B/subunit beta, ATP5MC1/subunit c (homooctomer), MT-ATP6/subunit a, MT-ATP8/subunit 8, ATP5ME/subunit e, ATP5MF/subunit f, ATP5MG/subunit g, ATP5MK/subunit k, ATP5MJ/subunit j, ATP5F1C/subunit gamma, ATP5F1D/subunit delta, ATP5F1E/subunit epsilon, ATP5PF/subunit F6, ATP5PB/subunit b, ATP5PD/subunit d, ATP5PO/subunit OSCP. ATP synthase complex consists of a soluble F(1) head domain (subunits alpha(3) and beta(3)) - the catalytic core - and a membrane F(0) domain - the membrane proton channel (subunits c, a, 8, e, f, g, k and j). These two domains are linked by a central stalk (subunits gamma, delta, and epsilon) rotating inside the F1 region and a stationary peripheral stalk (subunits F6, b, d, and OSCP). Interacts with DNAJC30; interaction is direct.

The protein localises to the mitochondrion inner membrane. It catalyses the reaction H(+)(in) = H(+)(out). In terms of biological role, subunit a, of the mitochondrial membrane ATP synthase complex (F(1)F(0) ATP synthase or Complex V) that produces ATP from ADP in the presence of a proton gradient across the membrane which is generated by electron transport complexes of the respiratory chain. ATP synthase complex consist of a soluble F(1) head domain - the catalytic core - and a membrane F(1) domain - the membrane proton channel. These two domains are linked by a central stalk rotating inside the F(1) region and a stationary peripheral stalk. During catalysis, ATP synthesis in the catalytic domain of F(1) is coupled via a rotary mechanism of the central stalk subunits to proton translocation. With the subunit c (ATP5MC1), forms the proton-conducting channel in the F(0) domain, that contains two crucial half-channels (inlet and outlet) that facilitate proton movement from the mitochondrial intermembrane space (IMS) into the matrix. Protons are taken up via the inlet half-channel and released through the outlet half-channel, following a Grotthuss mechanism. The chain is ATP synthase F(0) complex subunit a from Struthio camelus (Common ostrich).